A 720-amino-acid polypeptide reads, in one-letter code: Protein O-mannosyl-transferase 1 (720 aa).

Transmembrane regions (helical) follow at residues 7-27 (PVSVTVEINVLLLAVTALALF), 67-87 (FGHMILALGAYLGGFDGNFVW), 105-125 (LIPALAGSFCVPLAYLVVVEL), 127-147 (YSHFSALGACALLLMENSLIV), 150-170 (RFMLLESVLIFFLLLAVLSYL), 178-198 (SFFKWFWLVICGVSCAFGIGV), 201-221 (MGMFTYFLLLSLAAVHTWQLI), and 239-259 (FLALVVLPVIMYLGFFYIHLT). MIR domains lie at 291–354 (PLDV…IKDP), 365–422 (PKPV…VDIV), and 426–486 (SEKE…VEEH). 4 helical membrane-spanning segments follow: residues 570–590 (IVTWTTGNITLVVYCLLFLTY), 609–629 (LVLAGVVCLGGWAVNYLPFFL), 633–653 (TLFLYHYLPALTFKILQIPIV), and 670–690 (AFGGVILAVLCSVYMSYHSLS).

It belongs to the glycosyltransferase 39 family. In terms of tissue distribution, widely expressed. Has particularly strong expression in testis, ovary, brain, liver and heart.

It is found in the endoplasmic reticulum membrane. It carries out the reaction a di-trans,poly-cis-dolichyl beta-D-mannosyl phosphate + L-seryl-[protein] = 3-O-(alpha-D-mannosyl)-L-seryl-[protein] + a di-trans,poly-cis-dolichyl phosphate + H(+). It catalyses the reaction a di-trans,poly-cis-dolichyl beta-D-mannosyl phosphate + L-threonyl-[protein] = 3-O-(alpha-D-mannosyl)-L-threonyl-[protein] + a di-trans,poly-cis-dolichyl phosphate + H(+). The protein operates within protein modification; protein glycosylation. Its function is as follows. Transfers mannosyl residues to the hydroxyl group of serine or threonine residues. Coexpression of both POMT1 and POMT2 is necessary for enzyme activity, expression of either POMT1 or POMT2 alone is insufficient. The protein is Protein O-mannosyl-transferase 1 of Danio rerio (Zebrafish).